Reading from the N-terminus, the 457-residue chain is UDP-N-acetylmuramoylalanine--D-glutamate ligase (457 aa).

117–123 (GTNGKST) contacts ATP.

This sequence belongs to the MurCDEF family.

The protein resides in the cytoplasm. It catalyses the reaction UDP-N-acetyl-alpha-D-muramoyl-L-alanine + D-glutamate + ATP = UDP-N-acetyl-alpha-D-muramoyl-L-alanyl-D-glutamate + ADP + phosphate + H(+). The protein operates within cell wall biogenesis; peptidoglycan biosynthesis. Functionally, cell wall formation. Catalyzes the addition of glutamate to the nucleotide precursor UDP-N-acetylmuramoyl-L-alanine (UMA). In Paramagnetospirillum magneticum (strain ATCC 700264 / AMB-1) (Magnetospirillum magneticum), this protein is UDP-N-acetylmuramoylalanine--D-glutamate ligase.